Reading from the N-terminus, the 963-residue chain is Probable sucrose-phosphate synthase 2 (963 aa).

A disordered region spans residues 111-150; that stretch reads KLRTDTNADMSEDLFEGEKGEDAGDPSVAYGDSTTGSSPK.

It belongs to the glycosyltransferase 1 family. Homodimer or homotetramer. Expressed in germinating seeds.

It carries out the reaction beta-D-fructose 6-phosphate + UDP-alpha-D-glucose = sucrose 6(F)-phosphate + UDP + H(+). The protein operates within glycan biosynthesis; sucrose biosynthesis; sucrose from D-fructose 6-phosphate and UDP-alpha-D-glucose: step 1/2. With respect to regulation, activity is regulated by phosphorylation and moderated by concentration of metabolites and light. Functionally, plays a role in photosynthetic sucrose synthesis by catalyzing the rate-limiting step of sucrose biosynthesis from UDP-glucose and fructose- 6-phosphate. Involved in the regulation of carbon partitioning in the leaves of plants. May regulate the synthesis of sucrose and therefore play a major role as a limiting factor in the export of photoassimilates out of the leaf. Plays a role for sucrose availability that is essential for plant growth and fiber elongation. In Oryza sativa subsp. japonica (Rice), this protein is Probable sucrose-phosphate synthase 2 (SPS2).